Here is a 1135-residue protein sequence, read N- to C-terminus: Integrin alpha-7 (1135 aa).

The signal sequence occupies residues 1–33 (MARIPRCDFLGLPGICYLLSFLLAGLLLPRASA). Residues 34-1036 (FNLDVMGAIR…VAVVAEGVPW (1003 aa)) are Extracellular-facing. 7 FG-GAP repeats span residues 38 to 103 (VMGA…ETDC), 110 to 165 (RGAN…RCFV), 185 to 238 (EGRP…DPDQ), 248 to 305 (DRLT…ASRL), 306 to 367 (IPEV…HWAD), 368 to 423 (ISPL…GVVT), and 427 to 486 (QVLE…IDPR). Asn86 is a glycosylation site (N-linked (GlcNAc...) asparagine). Disulfide bonds link Cys94–Cys103, Cys140–Cys163, and Cys184–Cys197. The Ca(2+) site is built by Asp328, Asn330, Asp332, Asp336, Asp390, Asn392, Asp394, Asp398, Asp448, Asp450, Asn452, Tyr454, and Asp456. Cystine bridges form between Cys495–Cys502, Cys508–Cys571, Cys637–Cys643, Cys736–Cys747, Cys894–Cys948, and Cys955–Cys960. Residue Asn741 is glycosylated (N-linked (GlcNAc...) asparagine). Residues 905 to 916 (VDSRDRRRRELG) are compositionally biased toward basic and acidic residues. The disordered stretch occupies residues 905–933 (VDSRDRRRRELGQPEPQEPPEKVEPSTSW). N-linked (GlcNAc...) asparagine glycosylation is present at Asn943. N-linked (GlcNAc...) asparagine glycosylation is found at Asn979 and Asn999. A helical transmembrane segment spans residues 1037–1057 (WVILLAVLAGLLVLALLVLLL). Residues 1058-1135 (WKLGFFKRAK…PDGHPVSVTA (78 aa)) are Cytoplasmic-facing. Residues 1061 to 1065 (GFFKR) carry the GFFKR motif motif. 3 repeat units span residues 1111–1114 (DAHP), 1119–1122 (DWHP), and 1127–1130 (DGHP). Residues 1111–1130 (DAHPILAADWHPELGPDGHP) form a 3 X 4 AA repeats of D-X-H-P region.

Belongs to the integrin alpha chain family. Interacts (via C-terminus intracellular tail region) with CIB1; the interaction is stabilized/increased in a calcium- and magnesium-dependent manner. Heterodimer of an alpha and a beta subunit. The alpha subunit is composed of a heavy and a light chain linked by a disulfide bond. Alpha-7 associates with beta-1. Interacts with COMP. Post-translationally, ADP-ribosylated on at least two sites of the extracellular domain in skeletal myotubes. In terms of processing, a 70 kDa form is created by proteolytic cleavage. Cleavage is elevated during myogenic differentiation and the cleaved form enhances cell adhesion and spreading on laminin. As to expression, expressed in skeletal and cardiac muscle. Expressed in replicating myoblasts. In differentiated muscle fibers localizes between fibers and the surrounding matrix. Isoform Alpha-7X1A and isoform Alpha-7X1B are expressed at myotendinous and neuromuscular junctions; isoform Alpha-7X1C is expressed at neuromuscular junctions and at extrasynaptic sites.

The protein localises to the membrane. Its function is as follows. Integrin alpha-7/beta-1 is the primary laminin receptor on skeletal myoblasts and adult myofibers. During myogenic differentiation, it may induce changes in the shape and mobility of myoblasts, and facilitate their localization at laminin-rich sites of secondary fiber formation. Involved in the maintenance of the myofibers cytoarchitecture as well as for their anchorage, viability and functional integrity. Required to promote contractile phenotype acquisition in differentiated airway smooth muscle (ASM) cells. Acts as a Schwann cell receptor for laminin-2. Acts as a receptor of COMP and mediates its effect on vascular smooth muscle cells (VSMCs) maturation. This Rattus norvegicus (Rat) protein is Integrin alpha-7 (Itga7).